The primary structure comprises 285 residues: Foldase protein PrsA 2 (285 aa).

An N-terminal signal peptide occupies residues 1–20 (MRGKHIFIITALISILMLSA). The N-palmitoyl cysteine moiety is linked to residue C21. A lipid anchor (S-diacylglycerol cysteine) is attached at C21. The PpiC domain occupies 134–224 (KPEIKASHIL…NGYHVIKLTD (91 aa)).

It belongs to the PrsA family.

It localises to the cell membrane. It carries out the reaction [protein]-peptidylproline (omega=180) = [protein]-peptidylproline (omega=0). Functionally, plays a major role in protein secretion by helping the post-translocational extracellular folding of several secreted proteins. This chain is Foldase protein PrsA 2 (prsA2), found in Bacillus cereus (strain ATCC 14579 / DSM 31 / CCUG 7414 / JCM 2152 / NBRC 15305 / NCIMB 9373 / NCTC 2599 / NRRL B-3711).